Here is a 214-residue protein sequence, read N- to C-terminus: Adenylate kinase (214 aa).

10-15 contacts ATP; that stretch reads GAGKGT. The interval 30–59 is NMP; the sequence is STGDMFREEISAKSELGRKVEDILKRGELV. AMP is bound by residues Thr-31, Arg-36, 57–59, 85–88, and Gln-92; these read ELV and GYPR. Residues 126 to 163 form an LID region; sequence NRRICKNCGKIYNLITLPPKINGKCDVCGGELYQREDD. An ATP-binding site is contributed by Arg-127. Zn(2+)-binding residues include Cys-130 and Cys-133. 136–137 contributes to the ATP binding site; it reads IY. The Zn(2+) site is built by Cys-150 and Cys-153. Residues Arg-160 and Arg-171 each coordinate AMP. Met-199 serves as a coordination point for ATP.

Belongs to the adenylate kinase family. As to quaternary structure, monomer.

It localises to the cytoplasm. It carries out the reaction AMP + ATP = 2 ADP. It functions in the pathway purine metabolism; AMP biosynthesis via salvage pathway; AMP from ADP: step 1/1. Functionally, catalyzes the reversible transfer of the terminal phosphate group between ATP and AMP. Plays an important role in cellular energy homeostasis and in adenine nucleotide metabolism. This is Adenylate kinase from Thermosipho melanesiensis (strain DSM 12029 / CIP 104789 / BI429).